The following is a 638-amino-acid chain: 9-cis-epoxycarotenoid dioxygenase NCED1, chloroplastic (638 aa).

Residues 1-80 constitute a chloroplast transit peptide; that stretch reads MQRICPAHCS…QTEQEDEQLV (80 aa). Composition is skewed to low complexity over residues 28–37, 44–69, and 92–102; these read AASAAPQSPS, ASAA…TRTP, and TTNGRAAPSQS. Disordered regions lie at residues 28–80 and 92–113; these read AASA…EQLV and TTNG…PAAA. Positions 331, 380, 446, and 624 each coordinate Fe cation.

It belongs to the carotenoid oxygenase family. It depends on Fe(2+) as a cofactor.

It is found in the plastid. The protein resides in the chloroplast. It catalyses the reaction a 9-cis-epoxycarotenoid + O2 = a 12'-apo-carotenal + 2-cis,4-trans-xanthoxin. It carries out the reaction 9-cis-violaxanthin + O2 = (3S,5R,6S)-5,6-epoxy-3-hydroxy-5,6-dihydro-12'-apo-beta-caroten-12'-al + 2-cis,4-trans-xanthoxin. The enzyme catalyses 9'-cis-neoxanthin + O2 = (3S,5R,6R)-3,5-dihydroxy-6,7-didehydro-5,6-dihydro-12'-apo-beta-caroten-12'-al + 2-cis,4-trans-xanthoxin. Its function is as follows. Has a 11,12(11',12') 9-cis epoxycarotenoid cleavage activity. Catalyzes the first step of abscisic-acid biosynthesis from carotenoids. This is 9-cis-epoxycarotenoid dioxygenase NCED1, chloroplastic from Oryza sativa subsp. japonica (Rice).